The chain runs to 340 residues: Delta(1)-pyrroline-2-carboxylate reductase 1 (340 aa).

The active-site Charge relay system is the Ser50. His51 functions as the Proton donor in the catalytic mechanism. Residue Arg55 coordinates substrate. Residue 123-127 participates in NADP(+) binding; the sequence is HFSAL. Thr163 provides a ligand contact to substrate. 181-183 is a binding site for NADP(+); it reads DFA. 189–190 provides a ligand contact to substrate; that stretch reads RG. Residue Asp191 is the Charge relay system of the active site. NADP(+) contacts are provided by residues 232–233 and 307–313; these read HK and RLPSQRR.

It belongs to the LDH2/MDH2 oxidoreductase family. In terms of assembly, homodimer.

The catalysed reaction is L-proline + NAD(+) = 1-pyrroline-2-carboxylate + NADH + H(+). It catalyses the reaction L-proline + NADP(+) = 1-pyrroline-2-carboxylate + NADPH + H(+). Functionally, catalyzes the reduction of Delta(1)-pyrroline-2-carboxylate (Pyr2C) to L-proline, using NADPH as the electron donor. May be involved in a degradation pathway that converts trans-3-hydroxy-L-proline (t3LHyp) to L-proline. This chain is Delta(1)-pyrroline-2-carboxylate reductase 1, found in Burkholderia ambifaria (strain ATCC BAA-244 / DSM 16087 / CCUG 44356 / LMG 19182 / AMMD) (Burkholderia cepacia (strain AMMD)).